The primary structure comprises 198 residues: MQSKRGRPRDEGTHKAILSAAYDLLLEKGFDAVTVDKIAERAKVSKATIYKWWSNKAAVIMDSFLSTATDRLPVPDTGSSVQDIVTHATNLARFLTSREGTVIKELIGAGQLDEKLAEEYRTRFFQPRRLQAKGLLEKGIQKGELRENLDIEVSIDLIYGPIFYRLLITGDEVNDSYVRDLVMNAFKGVQATSATESM.

The HTH tetR-type domain occupies 11 to 71 (EGTHKAILSA…DSFLSTATDR (61 aa)). The segment at residues 34–53 (TVDKIAERAKVSKATIYKWW) is a DNA-binding region (H-T-H motif).

This is an uncharacterized protein from Bacillus subtilis (strain 168).